The primary structure comprises 387 residues: Gamma-butyrobetaine dioxygenase (387 aa).

Zn(2+) is bound by residues cysteine 38, cysteine 40, cysteine 43, and histidine 82. Residues histidine 202, aspartate 204, and histidine 347 each coordinate Fe cation. A Phosphoserine modification is found at serine 351.

The protein belongs to the gamma-BBH/TMLD family. Fe(2+) serves as cofactor. L-ascorbate is required as a cofactor.

The protein localises to the cytoplasm. It catalyses the reaction 4-(trimethylamino)butanoate + 2-oxoglutarate + O2 = carnitine + succinate + CO2. It functions in the pathway amine and polyamine biosynthesis; carnitine biosynthesis. Its function is as follows. Catalyzes the formation of L-carnitine from gamma-butyrobetaine. This Pongo abelii (Sumatran orangutan) protein is Gamma-butyrobetaine dioxygenase (BBOX1).